We begin with the raw amino-acid sequence, 463 residues long: Glutamate--tRNA ligase 1 (463 aa).

Positions 10-20 match the 'HIGH' region motif; sequence PSPTGYLHIGG. The 'KMSKS' region signature appears at 238-242; it reads KLSKR. Lysine 241 is a binding site for ATP.

Belongs to the class-I aminoacyl-tRNA synthetase family. Glutamate--tRNA ligase type 1 subfamily. Monomer.

It localises to the cytoplasm. It catalyses the reaction tRNA(Glu) + L-glutamate + ATP = L-glutamyl-tRNA(Glu) + AMP + diphosphate. In terms of biological role, catalyzes the attachment of glutamate to tRNA(Glu) in a two-step reaction: glutamate is first activated by ATP to form Glu-AMP and then transferred to the acceptor end of tRNA(Glu). The polypeptide is Glutamate--tRNA ligase 1 (Helicobacter pylori (strain HPAG1)).